A 415-amino-acid chain; its full sequence is Plasminogen activator inhibitor 2, macrophage (415 aa).

Residues asparagine 23, asparagine 75, asparagine 261, and asparagine 339 are each glycosylated (N-linked (GlcNAc...) asparagine).

It belongs to the serpin family. Ov-serpin subfamily. Interacts with PSMB1. Post-translationally, the signal sequence is not cleaved.

The protein localises to the cytoplasm. The protein resides in the secreted. Its subcellular location is the extracellular space. Functionally, inhibits urokinase-type plasminogen activator. The monocyte derived PAI-2 is distinct from the endothelial cell-derived PAI-1. Not required for normal murine development or survival. The polypeptide is Plasminogen activator inhibitor 2, macrophage (Serpinb2) (Mus musculus (Mouse)).